The following is a 144-amino-acid chain: C-type isolectin Sp-CL4 (144 aa).

The 118-residue stretch at 27–144 (DENRKVKYFE…CSEKLPFMCA (118 aa)) folds into the C-type lectin domain. 2 disulfides stabilise this stretch: Cys-48–Cys-143 and Cys-119–Cys-135.

It belongs to the true venom lectin family. Post-translationally, glycosylated with a carbohydrate of 383 Da. Expressed by the venom gland.

Its subcellular location is the secreted. Functionally, the role of this hemagglutinin in the venom is unknown, because it is masked by the high venom hemolytic activity. Lectin with specificity to galactose. Induces hemagglutination. The protein is C-type isolectin Sp-CL4 of Scorpaena plumieri (Spotted scorpionfish).